Consider the following 92-residue polypeptide: Probable Fe(2+)-trafficking protein (92 aa).

Belongs to the Fe(2+)-trafficking protein family.

In terms of biological role, could be a mediator in iron transactions between iron acquisition and iron-requiring processes, such as synthesis and/or repair of Fe-S clusters in biosynthetic enzymes. The polypeptide is Probable Fe(2+)-trafficking protein (Shewanella sp. (strain W3-18-1)).